The chain runs to 162 residues: Caveolin-2 (162 aa).

Over 1–86 the chain is Cytoplasmic; that stretch reads MGLETEKADV…FEMSKYVIYK (86 aa). Phosphotyrosine; by SRC is present on tyrosine 19. A phosphoserine mark is found at serine 20 and serine 23. Tyrosine 27 carries the post-translational modification Phosphotyrosine; by SRC. Positions 87–107 form an intramembrane region, helical; that stretch reads FLTVFLAIPLAFAAGILFATL. Topologically, residues 108–162 are cytoplasmic; the sequence is SCLHIWIIMPFVKTCLMVLPSVQTIWKSVTDVVIAPLCTSVGRSFSSVSLQLSHD.

Belongs to the caveolin family. Monomer or homodimer. Interacts with CAV1; the interaction forms a stable heterooligomeric complex that is required for targeting to lipid rafts and for caveolae formation. Tyrosine phosphorylated forms do not form heterooligomers with the Tyr-19-phosphorylated form existing as a monomer or dimer, and the Tyr-27-form as a monomer only. Interacts (tyrosine phosphorylated form) with the SH2 domain-containing proteins, RASA1, NCK1 and SRC. Interacts (tyrosine phosphorylated form) with INSR, the interaction (Tyr-27-phosphorylated form) is increased on insulin stimulation. Interacts (Tyr-19 phosphorylated form) with MAPK1 (phosphorylated form); the interaction, promoted by insulin, leads to nuclear location and MAPK1 activation. Interacts with STAT3; the interaction is increased on insulin-induced tyrosine phosphorylation leading to STAT activation. Post-translationally, phosphorylated on serine and tyrosine residues. CAV1 promotes phosphorylation on Ser-23 which then targets the complex to the plasma membrane, lipid rafts and caveolae. Phosphorylation on both Tyr-19 and Tyr-27 is required for insulin-induced 'Ser-727' phosphorylation of STAT3 and its activation. Phosphorylation on Tyr-19 is required for insulin-induced phosphorylation of MAPK1 and DNA binding of STAT3. Tyrosine phosphorylation is induced by both EGF and insulin.

Its subcellular location is the nucleus. The protein localises to the cytoplasm. The protein resides in the golgi apparatus membrane. It is found in the cell membrane. It localises to the membrane. Its subcellular location is the caveola. Functionally, may act as a scaffolding protein within caveolar membranes. Interacts directly with G-protein alpha subunits and can functionally regulate their activity. Acts as an accessory protein in conjunction with CAV1 in targeting to lipid rafts and driving caveolae formation. Positive regulator of cellular mitogenesis of the MAPK signaling pathway. Required for the insulin-stimulated nuclear translocation and activation of MAPK1 and STAT3, and the subsequent regulation of cell cycle progression. This chain is Caveolin-2 (CAV2), found in Muntiacus muntjak (Barking deer).